A 346-amino-acid chain; its full sequence is N-acetyl-gamma-glutamyl-phosphate reductase (346 aa).

The active site involves C149.

It belongs to the NAGSA dehydrogenase family. Type 1 subfamily.

The protein localises to the cytoplasm. The catalysed reaction is N-acetyl-L-glutamate 5-semialdehyde + phosphate + NADP(+) = N-acetyl-L-glutamyl 5-phosphate + NADPH + H(+). It participates in amino-acid biosynthesis; L-arginine biosynthesis; N(2)-acetyl-L-ornithine from L-glutamate: step 3/4. Its function is as follows. Catalyzes the NADPH-dependent reduction of N-acetyl-5-glutamyl phosphate to yield N-acetyl-L-glutamate 5-semialdehyde. This Geobacter sp. (strain M21) protein is N-acetyl-gamma-glutamyl-phosphate reductase.